We begin with the raw amino-acid sequence, 1048 residues long: Anguibactin system regulator (1048 aa).

The Carrier domain maps to 965-1039 (PIITASEDRV…AFAIIMDRCR (75 aa)).

This sequence belongs to the ATP-dependent AMP-binding enzyme family.

It functions in the pathway siderophore biosynthesis; anguibactin biosynthesis. In terms of biological role, bifunctional protein that plays an essential role in virulence. Plays a role in both the production of the siderophore anguibactin and the regulation of iron transport genes. The polypeptide is Anguibactin system regulator (angR) (Vibrio anguillarum (Listonella anguillarum)).